A 24-amino-acid polypeptide reads, in one-letter code: Heptapoietin A light chain (24 aa).

In terms of assembly, heterodimer of a heavy and a light chain linked by disulfide bond(s).

Its function is as follows. HPTA is an acidic heparin-binding growth factor for hepatocytes. The sequence is that of Heptapoietin A light chain from Oryctolagus cuniculus (Rabbit).